Reading from the N-terminus, the 344-residue chain is GTPase Obg (344 aa).

Residues 1–159 form the Obg domain; the sequence is MKFLDQAKVY…RWIWLRLKLI (159 aa). Residues 160–327 enclose the OBG-type G domain; that stretch reads ADAGLVGLPN…ALRLLLSVVE (168 aa). Residues 166 to 173, 191 to 195, 212 to 215, 279 to 282, and 308 to 310 each bind GTP; these read GLPNAGKS, FTTLH, DIPG, SKVD, and SAQ. Residues serine 173 and threonine 193 each coordinate Mg(2+).

Belongs to the TRAFAC class OBG-HflX-like GTPase superfamily. OBG GTPase family. As to quaternary structure, monomer. Mg(2+) serves as cofactor.

The protein localises to the cytoplasm. In terms of biological role, an essential GTPase which binds GTP, GDP and possibly (p)ppGpp with moderate affinity, with high nucleotide exchange rates and a fairly low GTP hydrolysis rate. Plays a role in control of the cell cycle, stress response, ribosome biogenesis and in those bacteria that undergo differentiation, in morphogenesis control. In Xanthobacter autotrophicus (strain ATCC BAA-1158 / Py2), this protein is GTPase Obg.